A 682-amino-acid polypeptide reads, in one-letter code: Potassium-transporting ATPase ATP-binding subunit (682 aa).

4 helical membrane passes run 34–54 (PVMFVVWAGSVLTTLLTLAMV), 58–78 (IAGSALFTGIISLWLWFTVLF), 219–239 (IALTILLIALTIVFLLATATL), and 254–274 (VLVALLVCLIPTTIGGLLSAI). Catalysis depends on D307, which acts as the 4-aspartylphosphate intermediate. ATP-binding positions include D344, E348, 377 to 384 (FTAQSRMS), and K395. Mg(2+)-binding residues include D518 and D522. 3 helical membrane-spanning segments follow: residues 588–608 (FAIIPAAFAATYPQLNALNVM), 616–636 (AILSAVIFNALIIIFLIPLAL), and 662–682 (LVVPFIGIKVIDVLLTLLGLA).

It belongs to the cation transport ATPase (P-type) (TC 3.A.3) family. Type IA subfamily. As to quaternary structure, the system is composed of three essential subunits: KdpA, KdpB and KdpC.

It localises to the cell inner membrane. The catalysed reaction is K(+)(out) + ATP + H2O = K(+)(in) + ADP + phosphate + H(+). Functionally, part of the high-affinity ATP-driven potassium transport (or Kdp) system, which catalyzes the hydrolysis of ATP coupled with the electrogenic transport of potassium into the cytoplasm. This subunit is responsible for energy coupling to the transport system and for the release of the potassium ions to the cytoplasm. The polypeptide is Potassium-transporting ATPase ATP-binding subunit (Salmonella enteritidis PT4 (strain P125109)).